Here is a 194-residue protein sequence, read N- to C-terminus: Segregation and condensation protein B (194 aa).

This sequence belongs to the ScpB family. In terms of assembly, homodimer. Homodimerization may be required to stabilize the binding of ScpA to the Smc head domains. Component of a cohesin-like complex composed of ScpA, ScpB and the Smc homodimer, in which ScpA and ScpB bind to the head domain of Smc. The presence of the three proteins is required for the association of the complex with DNA.

It is found in the cytoplasm. Functionally, participates in chromosomal partition during cell division. May act via the formation of a condensin-like complex containing Smc and ScpA that pull DNA away from mid-cell into both cell halves. The sequence is that of Segregation and condensation protein B from Brevibacillus brevis (strain 47 / JCM 6285 / NBRC 100599).